The primary structure comprises 290 residues: Diaminopimelate epimerase (290 aa).

Asn14 and Asn67 together coordinate substrate. The active-site Proton donor is Cys76. Substrate-binding positions include 77–78 (GN), Asn166, Asn199, and 217–218 (ER). Cys226 functions as the Proton acceptor in the catalytic mechanism. 227–228 (GT) lines the substrate pocket.

This sequence belongs to the diaminopimelate epimerase family. Homodimer.

It localises to the cytoplasm. It catalyses the reaction (2S,6S)-2,6-diaminopimelate = meso-2,6-diaminopimelate. Its pathway is amino-acid biosynthesis; L-lysine biosynthesis via DAP pathway; DL-2,6-diaminopimelate from LL-2,6-diaminopimelate: step 1/1. Functionally, catalyzes the stereoinversion of LL-2,6-diaminopimelate (L,L-DAP) to meso-diaminopimelate (meso-DAP), a precursor of L-lysine and an essential component of the bacterial peptidoglycan. The polypeptide is Diaminopimelate epimerase (Geobacillus thermodenitrificans (strain NG80-2)).